A 145-amino-acid polypeptide reads, in one-letter code: uncharacterized protein (145 aa).

The protein belongs to the asfivirus K145R family.

The protein resides in the virion. This is an uncharacterized protein from African swine fever virus (isolate Pig/Kenya/KEN-50/1950) (ASFV).